Here is a 723-residue protein sequence, read N- to C-terminus: Threonine--tRNA ligase 1, cytoplasmic (723 aa).

A disordered region spans residues 1 to 46; that stretch reads MFEEKASSPSGKMGGEEKPIGAGEEKQKEGGKKKNKEGSGDGGRAE. Residues 14 to 39 show a composition bias toward basic and acidic residues; that stretch reads GGEEKPIGAGEEKQKEGGKKKNKEGS. Serine 39 is modified (phosphoserine). A TGS domain is found at 79-143; that stretch reads DSKPIKVTLP…EEDCTLELLK (65 aa). Lysine 243 is subject to N6-acetyllysine. Threonine 246 carries the phosphothreonine modification. Tyrosine 298 carries the phosphotyrosine modification. The residue at position 453 (threonine 453) is a Phosphothreonine. A Phosphoserine modification is found at serine 702.

This sequence belongs to the class-II aminoacyl-tRNA synthetase family. In terms of assembly, homodimer. In terms of processing, ISGylated.

It localises to the cytoplasm. It carries out the reaction tRNA(Thr) + L-threonine + ATP = L-threonyl-tRNA(Thr) + AMP + diphosphate + H(+). Inhibited by borrelidin (BN, IC 50 is 7 nM), which binds to 4 distinct subsites in the protein, preventing binding of all 3 substrates. In terms of biological role, catalyzes the attachment of threonine to tRNA(Thr) in a two-step reaction: threonine is first activated by ATP to form Thr-AMP and then transferred to the acceptor end of tRNA(Thr). Also edits incorrectly charged tRNA(Thr) via its editing domain, at the post-transfer stage. This Homo sapiens (Human) protein is Threonine--tRNA ligase 1, cytoplasmic.